We begin with the raw amino-acid sequence, 370 residues long: Uroporphyrinogen decarboxylase (370 aa).

Substrate is bound by residues 29–33, aspartate 79, tyrosine 155, serine 210, and histidine 342; that span reads RQAGR.

This sequence belongs to the uroporphyrinogen decarboxylase family. In terms of assembly, homodimer.

The protein localises to the cytoplasm. It catalyses the reaction uroporphyrinogen III + 4 H(+) = coproporphyrinogen III + 4 CO2. Its pathway is porphyrin-containing compound metabolism; protoporphyrin-IX biosynthesis; coproporphyrinogen-III from 5-aminolevulinate: step 4/4. Its function is as follows. Catalyzes the decarboxylation of four acetate groups of uroporphyrinogen-III to yield coproporphyrinogen-III. The polypeptide is Uroporphyrinogen decarboxylase (Variovorax paradoxus (strain S110)).